Consider the following 102-residue polypeptide: Circadian clock oscillator protein KaiA (102 aa).

The KaiA C-terminal domain occupies methionine 1–lysine 102.

It belongs to the KaiA family. In terms of assembly, homodimer. The KaiABC complex composition changes during the circadian cycle to control KaiC phosphorylation. Complexes KaiC(6), KaiA(2-4):KaiC(6), KaiB(6):KaiC(6) and KaiC(6):KaiB(6):KaiA(12) are among the most important forms, many form cooperatively. KaiA and CikA bind to the same region of the KaiB(fs) form and therefore compete.

In terms of biological role, key component of the KaiABC oscillator complex, which constitutes the main circadian regulator in cyanobacteria. Complex composition changes during the circadian cycle to control KaiC phosphorylation. KaiA stimulates KaiC autophosphorylation, while KaiB sequesters KaiA, leading to KaiC autodephosphorylation. KaiA binding to the KaiC CII domain during the subjective day yields KaiA(2-4):KaiC(6) complexes which stimulate KaiC autophosphorylation. Phospho-Ser-431 KaiC accumulation triggers binding of KaiB during the subjective night to form the KaiB(6):KaiC(6) complex, leading to changes in the output regulators CikA and SasA. KaiB(6):KaiC(6) formation exposes a site for KaiA binding on KaiB that sequesters KaiA from KaiC's CII domain, making the KaiC(6):KaiB(6):KaiA(12) complex resulting in KaiC autodephosphorylation. Complete dephosphorylation of KaiC leads to dissociation of KaiA(2):KaiB(1), completing 1 cycle of the Kai oscillator. This Nostoc sp. (strain PCC 7120 / SAG 25.82 / UTEX 2576) protein is Circadian clock oscillator protein KaiA.